We begin with the raw amino-acid sequence, 239 residues long: Tetratricopeptide repeat protein 9B (239 aa).

Residues Met1–Ala54 form a disordered region. A phosphoserine mark is found at Ser7 and Ser27. Residues Pro16–Gly32 show a composition bias toward pro residues. A TPR 1 repeat occupies Ala63–Gln97. The interval Gly98–Ser121 is disordered. Residues Leu104–Ser114 are compositionally biased toward pro residues. The TPR 2 repeat unit spans residues Phe169 to Asp202.

The protein belongs to the TTC9 family.

This chain is Tetratricopeptide repeat protein 9B (Ttc9b), found in Mus musculus (Mouse).